A 4760-amino-acid chain; its full sequence is Nonribosomal peptide synthetase cm3A (4760 aa).

The segment covering 1–12 has biased composition (polar residues); it reads MKHLASSENMPT. Residues 1–24 are disordered; the sequence is MKHLASSENMPTPAQDRAPSPSAM. In terms of domain architecture, Carrier 1 spans 19–95; it reads PSPSAMQQEI…ELSRSAECQL (77 aa). An O-(pantetheine 4'-phosphoryl)serine modification is found at serine 56. Condensation regions lie at residues 142–570 and 178–571; these read QDIF…EIEQ and PGLS…IEQL. Residues 591 to 984 form an adenylation 1 region; sequence DEQARLCPDA…GRRDTQVKLR (394 aa). Residues 1120-1197 form the Carrier 2 domain; that stretch reads REATTLQLQI…KLTEKLGVPE (78 aa). An O-(pantetheine 4'-phosphoryl)serine modification is found at serine 1158. 2 condensation regions span residues 1210–1654 and 1689–2125; these read FPLS…KTPS and VEDM…NVTT. Residues 2171 to 2551 form an adenylation 2 region; it reads DGDLTYFELD…DRKDWQIKIR (381 aa). The 79-residue stretch at 2684–2762 folds into the Carrier 3 domain; that stretch reads LPSSETEKTV…ELAHAIDQRS (79 aa). O-(pantetheine 4'-phosphoryl)serine is present on serine 2721. The segment at 2811-3203 is condensation 4; sequence VEDIYPCTPL…RFKHIFGQLS (393 aa). Residues 3255–3647 form an adenylation 3 region; that stretch reads SATTPDRPAV…GRADQQLKIR (393 aa). A Carrier 4 domain is found at 3783–3857; that stretch reads TRTEELMQSV…QLAQRATTDA (75 aa). Condensation regions lie at residues 3869–4296 and 4340–4757; these read EFRL…TLLC and EDIY…EEMG.

The protein belongs to the nrps family.

The protein operates within secondary metabolite biosynthesis. Its function is as follows. Nonribosomal peptide synthetase; part of the gene cluster that mediates the biosynthesis of beauveriolides I and III, cyclodepsipeptides acting as inhibitors of the acyl-CoA:cholesterol acyltransferase. The HR-PKS cm3B initiates the biosynthesis of beauveriolides by iteratively catalyzing the formation of the linear polyketide chain. The ATP-dependent acetyl-CoA ligase cm3D converts the polyketide carboxylic acid to a CoA thioester which id shuttled to the first T domain in the NRPS cm3A by the acetyltransferase cm3C. Cm3A contains 13 domains and assembles the polyketide chain, L-phenylalanine, L-alanine, and D-leucine (or D-allo-isoleucine) to form beauveriolide I (or beauveriolide III). The production of both beauveriolides I and III suggests the substrate adaptability of cm3B, using different amino acids as substrates. This is Nonribosomal peptide synthetase cm3A from Cordyceps militaris (strain CM01) (Caterpillar fungus).